Reading from the N-terminus, the 210-residue chain is Protoporphyrinogen IX oxidase (210 aa).

Helical transmembrane passes span 22–42, 74–94, 103–123, 141–161, and 165–185; these read WFKA…FYLV, YNII…GLIF, GWLH…FYCG, FRAL…LAVF, and LPLD…AASI. A heme-binding site is contributed by H27. K108 provides a ligand contact to heme.

It belongs to the HemJ family. As to quaternary structure, homodimer. Can also form higher oligomers, most probably tetramers. Interacts with Sll1106, however it is unlikely that Sll1106 is required for PPO function. Heme b is required as a cofactor.

It localises to the cell membrane. The enzyme catalyses protoporphyrinogen IX + 3 A = protoporphyrin IX + 3 AH2. It functions in the pathway porphyrin-containing compound metabolism; protoporphyrin-IX biosynthesis; protoporphyrin-IX from protoporphyrinogen-IX: step 1/1. Catalyzes the oxidation of protoporphyrinogen IX to protoporphyrin IX. Is involved in the biosynthesis of tetrapyrrole molecules like heme and chlorophyll. Does not use oxygen or artificial electron acceptors such as menadione or benzoquinone. Is functionally coupled with coproporphyrinogen III oxidase (CPO). Is essential for growth. This chain is Protoporphyrinogen IX oxidase, found in Synechocystis sp. (strain ATCC 27184 / PCC 6803 / Kazusa).